The sequence spans 366 residues: MAP kinase-activated protein kinase 2 (366 aa).

Residues Lys30–Ile291 form the Protein kinase domain. ATP-binding positions include Leu36–Val44 and Lys59. A staurosporine-binding site is contributed by Glu105–Leu107. The active-site Proton acceptor is the Asp152. Position 188 is a phosphothreonine; by MAPK14 (Thr188). Ser238 is modified (phosphoserine; by MAPK14). Phosphoserine; by autocatalysis is present on Ser294. Residues Ser294–Arg330 form an autoinhibitory helix region. Thr300 bears the Phosphothreonine; by MAPK14 mark. Lys319 participates in a covalent cross-link: Glycyl lysine isopeptide (Lys-Gly) (interchain with G-Cter in SUMO). A Nuclear export signal (NES) motif is present at residues Met322–Val331. Residues Asp332–Ala356 form a p38 MAPK-binding site region. Short sequence motifs (bipartite nuclear localization signal) lie at residues Lys337 to Lys340 and Lys351 to Lys355.

Belongs to the protein kinase superfamily. CAMK Ser/Thr protein kinase family. Heterodimer with p38-alpha/MAPK14; this heterodimer forms a stable complex: molecules are positioned 'face to face' so that the ATP-binding sites of both kinases are at the heterodimer interface. Interacts with PHC2. Interacts with HSF1. Sumoylation inhibits the protein kinase activity. Post-translationally, phosphorylated and activated by MAP kinase p38-alpha/MAPK14 at Thr-188, Ser-238 and Thr-300.

The protein resides in the cytoplasm. It is found in the nucleus. It carries out the reaction L-seryl-[protein] + ATP = O-phospho-L-seryl-[protein] + ADP + H(+). The catalysed reaction is L-threonyl-[protein] + ATP = O-phospho-L-threonyl-[protein] + ADP + H(+). Its activity is regulated as follows. Activated following phosphorylation by p38-alpha/MAPK14 following various stresses. Inhibited following sumoylation. Specifically inhibited by pyrrolopyridine inhibitors. In terms of biological role, stress-activated serine/threonine-protein kinase involved in cytokine production, endocytosis, reorganization of the cytoskeleton, cell migration, cell cycle control, chromatin remodeling, DNA damage response and transcriptional regulation. Following stress, it is phosphorylated and activated by MAP kinase p38-alpha/MAPK14, leading to phosphorylation of substrates. Phosphorylates serine in the peptide sequence, Hyd-X-R-X(2)-S, where Hyd is a large hydrophobic residue. Phosphorylates ALOX5, CDC25B, CDC25C, CEP131, ELAVL1, HNRNPA0, HSP27/HSPB1, KRT18, KRT20, LIMK1, LSP1, PABPC1, PARN, PDE4A, RCSD1, RPS6KA3, TAB3 and TTP/ZFP36. Phosphorylates HSF1; leading to the interaction with HSP90 proteins and inhibiting HSF1 homotrimerization, DNA-binding and transactivation activities. Mediates phosphorylation of HSP27/HSPB1 in response to stress, leading to dissociation of HSP27/HSPB1 from large small heat-shock protein (sHsps) oligomers and impairment of their chaperone activities and ability to protect against oxidative stress effectively. Involved in inflammatory response by regulating tumor necrosis factor (TNF) and IL6 production post-transcriptionally: acts by phosphorylating AU-rich elements (AREs)-binding proteins ELAVL1, HNRNPA0, PABPC1 and TTP/ZFP36, leading to regulate the stability and translation of TNF and IL6 mRNAs. Phosphorylation of TTP/ZFP36, a major post-transcriptional regulator of TNF, promotes its binding to 14-3-3 proteins and reduces its ARE mRNA affinity leading to inhibition of dependent degradation of ARE-containing transcripts. Phosphorylates CEP131 in response to cellular stress following ultraviolet irradiation which promotes binding of CEP131 to 14-3-3 proteins and inhibits formation of novel centriolar satellites. Also involved in late G2/M checkpoint following DNA damage through a process of post-transcriptional mRNA stabilization: following DNA damage, relocalizes from nucleus to cytoplasm and phosphorylates HNRNPA0 and PARN, leading to stabilization of GADD45A mRNA. Involved in toll-like receptor signaling pathway (TLR) in dendritic cells: required for acute TLR-induced macropinocytosis by phosphorylating and activating RPS6KA3. The chain is MAP kinase-activated protein kinase 2 (MAPKAPK2) from Oryctolagus cuniculus (Rabbit).